The primary structure comprises 618 residues: Grainyhead-like protein 1 homolog (618 aa).

The interval 1–91 (MTQEYDNKRP…EGEHPEPEHS (91 aa)) is transcription activation. Residues 76–92 (SSAVKPEGEHPEPEHSK) show a composition bias toward basic and acidic residues. The disordered stretch occupies residues 76 to 100 (SSAVKPEGEHPEPEHSKRNSIPNVT). Phosphothreonine is present on Thr208. Residues 248–474 (SGNNFEYTLE…DLDTQPVLFI (227 aa)) form the Grh/CP2 DB domain. Interaction with DNA stretches follow at residues 380 to 389 (TDFSSQKGVK) and 427 to 430 (RKIR).

This sequence belongs to the grh/CP2 family. Grainyhead subfamily. Binds DNA as homodimer. Homodimer, also forms heterodimers with GRHL2 or GRHL3. Post-translationally, methylation at Arg-9 and Lys-116 may be involved in regulating transcriptional activation. Isoform 1 is highly expressed in brain, pancreas, tonsil, placenta and kidney. Isoform 2 is highly expressed in brain and liver. Expression in the skin is confined to the suprabasal layers of the epidermis and to the hair follicles.

Its subcellular location is the nucleus. In terms of biological role, transcription factor involved in epithelial development. Binds directly to the consensus DNA sequence 5'-AACCGGTT-3'. Important regulator of DSG1 in the context of hair anchorage and epidermal differentiation, participates in the maintenance of the skin barrier. There is no genetic interaction with GRHL3, nor functional cooperativity due to diverse target gene selectivity during epithelia development. May play a role in regulating glucose homeostasis and insulin signaling. The polypeptide is Grainyhead-like protein 1 homolog (Mus musculus (Mouse)).